Here is a 979-residue protein sequence, read N- to C-terminus: Probable serine/threonine-protein kinase iksA (979 aa).

N-linked (GlcNAc...) asparagine glycosylation is found at Asn32, Asn110, Asn120, Asn121, Asn147, Asn155, Asn161, Asn220, Asn231, and Asn243. Residues 207–245 (SKSGVNNNNNNNNNDSTTTNNNNNNNTTPPQQQQQQNSS) are disordered. The segment covering 212–244 (NNNNNNNNNDSTTTNNNNNNNTTPPQQQQQQNS) has biased composition (low complexity). The Protein kinase domain occupies 261-568 (FKEDIKIGSG…ISQILSTHFI (308 aa)). Residues 267–275 (IGSGGFGSV) and Lys293 each bind ATP. Asp397 (proton acceptor) is an active-site residue. 7 N-linked (GlcNAc...) asparagine glycosylation sites follow: Asn592, Asn597, Asn615, Asn645, Asn646, Asn663, and Asn699. Positions 593–602 (TSVHNTTAST) are enriched in polar residues. The segment at 593–666 (TSVHNTTAST…LGNNNNNNTN (74 aa)) is disordered. A compositionally biased stretch (low complexity) spans 610 to 666 (SISTTNSTTSSSSSTATSSSLSSTTIATTSSSNAINNTTATTTTNSNLGNNNNNNTN). The span at 713–727 (NDDIIIDDDDDDDDS) shows a compositional bias: acidic residues. A disordered region spans residues 713-793 (NDDIIIDDDD…GNNGIRKALP (81 aa)). Low complexity-rich tracts occupy residues 728-737 (TNNNDTNNTD) and 753-773 (NNKK…SSNK). Asn731 and Asn734 each carry an N-linked (GlcNAc...) asparagine glycan. Residues 846-866 (FPSPILLYPLLLLSLIPILVV) form a helical membrane-spanning segment. N-linked (GlcNAc...) asparagine glycosylation is found at Asn870 and Asn894. 2 consecutive transmembrane segments (helical) span residues 912 to 932 (INTI…VLLP) and 956 to 976 (FPLL…IFIF).

The protein belongs to the protein kinase superfamily. Ser/Thr protein kinase family.

The protein resides in the membrane. The enzyme catalyses L-seryl-[protein] + ATP = O-phospho-L-seryl-[protein] + ADP + H(+). It catalyses the reaction L-threonyl-[protein] + ATP = O-phospho-L-threonyl-[protein] + ADP + H(+). The chain is Probable serine/threonine-protein kinase iksA (iksA) from Dictyostelium discoideum (Social amoeba).